We begin with the raw amino-acid sequence, 482 residues long: Glutamate--tRNA ligase (482 aa).

Positions 9-19 (PSPTGPLHIGG) match the 'HIGH' region motif. The short motif at 250–254 (KMSKR) is the 'KMSKS' region element. Residue Lys253 coordinates ATP.

Belongs to the class-I aminoacyl-tRNA synthetase family. Glutamate--tRNA ligase type 1 subfamily. In terms of assembly, monomer.

It is found in the cytoplasm. The enzyme catalyses tRNA(Glu) + L-glutamate + ATP = L-glutamyl-tRNA(Glu) + AMP + diphosphate. Its function is as follows. Catalyzes the attachment of glutamate to tRNA(Glu) in a two-step reaction: glutamate is first activated by ATP to form Glu-AMP and then transferred to the acceptor end of tRNA(Glu). The sequence is that of Glutamate--tRNA ligase from Desulforamulus reducens (strain ATCC BAA-1160 / DSM 100696 / MI-1) (Desulfotomaculum reducens).